Reading from the N-terminus, the 196-residue chain is dTTP/UTP pyrophosphatase (196 aa).

Asp72 serves as the catalytic Proton acceptor.

The protein belongs to the Maf family. YhdE subfamily. Requires a divalent metal cation as cofactor.

It localises to the cytoplasm. It carries out the reaction dTTP + H2O = dTMP + diphosphate + H(+). The catalysed reaction is UTP + H2O = UMP + diphosphate + H(+). Functionally, nucleoside triphosphate pyrophosphatase that hydrolyzes dTTP and UTP. May have a dual role in cell division arrest and in preventing the incorporation of modified nucleotides into cellular nucleic acids. The chain is dTTP/UTP pyrophosphatase from Chlamydia trachomatis serovar A (strain ATCC VR-571B / DSM 19440 / HAR-13).